We begin with the raw amino-acid sequence, 488 residues long: Acetyl-coenzyme A carboxylase carboxyl transferase subunit beta, chloroplastic (488 aa).

One can recognise a CoA carboxyltransferase N-terminal domain in the interval 227–488 (LWIQCDNCYG…LHAFFPLNTN (262 aa)). Positions 231, 234, 247, and 250 each coordinate Zn(2+). The C4-type zinc-finger motif lies at 231-250 (CDNCYGLMYKKVKMNVCEQC).

Belongs to the AccD/PCCB family. In terms of assembly, acetyl-CoA carboxylase is a heterohexamer composed of biotin carboxyl carrier protein, biotin carboxylase and 2 subunits each of ACCase subunit alpha and ACCase plastid-coded subunit beta (accD). It depends on Zn(2+) as a cofactor. Accumulates in fatty acids synthesizing tissues such as embryos, expanding leaves, flower buds, flowers, and developing siliques.

It localises to the plastid. It is found in the chloroplast membrane. Its subcellular location is the chloroplast stroma. It catalyses the reaction N(6)-carboxybiotinyl-L-lysyl-[protein] + acetyl-CoA = N(6)-biotinyl-L-lysyl-[protein] + malonyl-CoA. It participates in lipid metabolism; malonyl-CoA biosynthesis; malonyl-CoA from acetyl-CoA: step 1/1. Its function is as follows. Component of the acetyl coenzyme A carboxylase (ACC) complex. Biotin carboxylase (BC) catalyzes the carboxylation of biotin on its carrier protein (BCCP) and then the CO(2) group is transferred by the transcarboxylase to acetyl-CoA to form malonyl-CoA. This is Acetyl-coenzyme A carboxylase carboxyl transferase subunit beta, chloroplastic from Arabidopsis thaliana (Mouse-ear cress).